The sequence spans 112 residues: Dolichyl-diphosphooligosaccharide--protein glycosyltransferase subunit DAD1 (112 aa).

Residues 1-27 lie on the Cytoplasmic side of the membrane; it reads MVELSSVISKFYNDYVQNTPKKLKLVD. Residues 28–48 form a helical membrane-spanning segment; sequence IYLGYILLTGIIQFVYCCLVG. At 49–51 the chain is on the lumenal side; the sequence is TFP. The helical transmembrane segment at 52-72 threads the bilayer; that stretch reads FNSFLSGFISTVSCFVLAVCL. The Cytoplasmic portion of the chain corresponds to 73–91; sequence RLQANPQNKSVFAGISPER. The helical transmembrane segment at 92–112 threads the bilayer; sequence GFADFIFAHVILHLVVMNFIG.

The protein belongs to the DAD/OST2 family. As to quaternary structure, component of the oligosaccharyltransferase (OST) complex.

The protein resides in the endoplasmic reticulum membrane. It participates in protein modification; protein glycosylation. Its function is as follows. Subunit of the oligosaccharyl transferase (OST) complex that catalyzes the initial transfer of a defined glycan (Glc(3)Man(9)GlcNAc(2) in eukaryotes) from the lipid carrier dolichol-pyrophosphate to an asparagine residue within an Asn-X-Ser/Thr consensus motif in nascent polypeptide chains, the first step in protein N-glycosylation. N-glycosylation occurs cotranslationally and the complex associates with the Sec61 complex at the channel-forming translocon complex that mediates protein translocation across the endoplasmic reticulum (ER). All subunits are required for a maximal enzyme activity. Probably as part of the N-glycosylation pathway, plays a role in the regulation of tissue growth and apoptosis. This Drosophila melanogaster (Fruit fly) protein is Dolichyl-diphosphooligosaccharide--protein glycosyltransferase subunit DAD1.